A 693-amino-acid chain; its full sequence is Adhesion G-protein coupled receptor G1 (693 aa).

The N-terminal stretch at 1–25 is a signal peptide; the sequence is MTPQSLLQTTLFLLSLLFLVQGAHG. 26 to 33 lines the heparin pocket; sequence RGHREDFR. Over 26–401 the chain is Extracellular; it reads RGHREDFRFC…SVEVDAVHKH (376 aa). 2 disulfide bridges follow: Cys-35-Cys-91 and Cys-121-Cys-177. Residues Asn-39, Asn-148, and Asn-171 are each glycosylated (N-linked (GlcNAc...) asparagine). 190–200 is a heparin binding site; that stretch reads LKHPQKASRRP. A GAIN-B domain is found at 224–395; it reads DMVSFEEDRI…AVLMVSSVEV (172 aa). Residues Asn-234, Asn-303, Asn-324, and Asn-341 are each glycosylated (N-linked (GlcNAc...) asparagine). Intrachain disulfides connect Cys-346–Cys-377 and Cys-366–Cys-379. Positions 346 to 395 are GPS; the sequence is CVFWVEDPTLSSPGHWSSAGCETVRRETQTSCFCNHLTYFAVLMVSSVEV. The segment at 384 to 397 is stachel; the sequence is YFAVLMVSSVEVDA. A helical transmembrane segment spans residues 402 to 424; that stretch reads YLSLLSYVGCVVSALACLVTIAA. Residues 425-437 are Cytoplasmic-facing; sequence YLCSRVPLPCRRK. Residues 438–460 form a helical membrane-spanning segment; that stretch reads PRDYTIKVHMNLLLAVFLLDTSF. Over 461–465 the chain is Extracellular; the sequence is LLSEP. A helical membrane pass occupies residues 466–495; sequence VALTGSEAGCRASAIFLHFSLLTCLSWMGL. Residues Cys-475 and Cys-562 are joined by a disulfide bond. Residues 496 to 510 are Cytoplasmic-facing; the sequence is EGYNLYRLVVEVFGT. The helical transmembrane segment at 511-533 threads the bilayer; sequence YVPGYLLKLSAMGWGFPIFLVTL. Residues 534–562 lie on the Extracellular side of the membrane; sequence VALVDVDNYGPIILAVHRTPEGVIYPSMC. The helical transmembrane segment at 563-588 threads the bilayer; that stretch reads WIRDSLVSYITNLGLFSLVFLFNMAM. Residues 589–602 lie on the Cytoplasmic side of the membrane; the sequence is LATMVVQILRLRPH. The chain crosses the membrane as a helical span at residues 603–624; that stretch reads TQKWSHVLTLLGLSLVLGLPWA. Residues 625–628 are Extracellular-facing; it reads LIFF. Residues 629 to 654 form a helical membrane-spanning segment; sequence SFASGTFQLVVLYLFSIITSFQGFLI. The Cytoplasmic portion of the chain corresponds to 655 to 693; it reads FIWYWSMRLQARGGPSPLKSNSDSARLPISSGSTSSSRI. The tract at residues 670–693 is disordered; the sequence is SPLKSNSDSARLPISSGSTSSSRI. Low complexity predominate over residues 684–693; it reads SSGSTSSSRI.

The protein belongs to the G-protein coupled receptor 2 family. LN-TM7 subfamily. Heterodimer of 2 chains generated by proteolytic processing; the large extracellular N-terminal fragment (ADGRG1 NT) and the membrane-bound C-terminal fragment (ADGRG1-CT) predominantly remain associated and non-covalently linked. ADGRG1 NT self-associates in a trans-trans manner; the homophilic interaction enhances receptor signaling. Interacts with TGM2. Interacts with heparin; leading to the reduction of ADGRG1 shedding. Interacts with COL3A1. Part of a GPCR-tetraspanin complex at least consisting of ADGRG1, CD81, eventually CD9, and GNA11 in which CD81 is enhancing the association of ADGRG1 with GNA11. In terms of processing, autoproteolytically cleaved into 2 fragments; the large extracellular N-terminal fragment (ADGRG1 NT) and the membrane-bound C-terminal fragment (ADGRG1 CT) predominantly remain associated and non-covalently linked. Shedding to yield the secreted ADGRG1 N-terminal fragment seems to involve metalloprotease(s). N-glycosylated. Contains sialic acid residues. Post-translationally, ubiquitinated. Undergoes polyubiquitination upon activation. As to expression, widely distributed with highest levels found in thyroid gland, brain and heart. Expressed in a great number of tumor cells. Expression is down-regulated in different tumors from highly metastatic cells.

It is found in the cell membrane. Its subcellular location is the secreted. It localises to the membrane raft. With respect to regulation, forms a heterodimer of 2 chains generated by proteolytic processing that remain associated through non-covalent interactions mediated by the GAIN-B domain. In the inactivated receptor, the Stachel sequence (also named stalk) is embedded in the GAIN-B domain, where it adopts a beta-strand conformation. On activation, the Stachel moves into the 7 transmembrane region and adopts a twisted hook-shaped configuration that forms contacts within the receptor, leading to coupling of a G-alpha protein, which activates signaling. The cleaved GAIN-B and N-terminal domains can then dissociate from the rest of the receptor. In terms of biological role, adhesion G-protein coupled receptor (aGPCR) for steroid hormone 17alpha-hydroxypregnenolone (17-OH), which is involved in cell adhesion and cell-cell interactions. Ligand binding causes a conformation change that triggers signaling via guanine nucleotide-binding proteins (G proteins) and modulates the activity of downstream effectors, such as RhoA pathway. ADGRG1 is coupled to G(12) and/or G(13) G proteins (GNA12 and GNA13, respectively) and mediates the activation Rho small GTPases. Acts as a potent suppressor of ferroptosis: binding to 17-OH-binding initiates signaling that down-regulates CD36 and alleviates ferroptosis-induced liver injury. Ligand-binding also induces cell adhesion activity via association with proteins such as collagen III/COL3A1 and TGM2. Mediates cell matrix adhesion in developing neurons and hematopoietic stem cells. Involved in cortical development, specifically in maintenance of the pial basement membrane integrity and in cortical lamination: association with COL3A1 in the developing brain inhibits neuronal migration via activation of the RhoA pathway. Together with TGM2, acts as a regulator of myelination and myelin repair in oligodendrocyte precursor cells. Acts as a hemostatic sensor of shear force: G protein-coupled receptor signaling is activated in response to shear force in platelets, promoting G(13) G protein signaling, and platelet shape change and aggregation in a COL3A1-dependent manner. Acts as an inhibitor of VEGFA production thereby inhibiting angiogenesis through a signaling pathway mediated by PRKCA. Plays a role in the maintenance of hematopoietic stem cells in bone marrow niche. Plays an essential role in testis development. In Homo sapiens (Human), this protein is Adhesion G-protein coupled receptor G1.